The sequence spans 167 residues: MVDDGTRKALSGIPLLKTKAGPRDKELWVQRLKEEYQALIKYVQNNKASDMDWFRLESNKEGTKWFGKCWYMYNLHKYEFDVEFDIPITYPTTSPEIALPELDGKTAKMYRGGKICLTDHFKPLWARNVPKFGIAHAMALGLAPWLAVEVPDLIEKGVISYQEKGSS.

The Glycyl thioester intermediate role is filled by Cys116.

The protein belongs to the ubiquitin-conjugating enzyme family. UFC1 subfamily.

Its function is as follows. E2-like enzyme which forms an intermediate with UFM1 via a thioester linkage. The sequence is that of Ubiquitin-fold modifier-conjugating enzyme 1 from Anopheles gambiae (African malaria mosquito).